Consider the following 113-residue polypeptide: Large ribosomal subunit protein uL22 (113 aa).

The protein belongs to the universal ribosomal protein uL22 family. In terms of assembly, part of the 50S ribosomal subunit.

Its function is as follows. This protein binds specifically to 23S rRNA; its binding is stimulated by other ribosomal proteins, e.g. L4, L17, and L20. It is important during the early stages of 50S assembly. It makes multiple contacts with different domains of the 23S rRNA in the assembled 50S subunit and ribosome. The globular domain of the protein is located near the polypeptide exit tunnel on the outside of the subunit, while an extended beta-hairpin is found that lines the wall of the exit tunnel in the center of the 70S ribosome. This Desulforudis audaxviator (strain MP104C) protein is Large ribosomal subunit protein uL22.